A 478-amino-acid polypeptide reads, in one-letter code: Putrescine oxidase (478 aa).

Residue 15–70 (RDVVVVGAGPAGLMAARTLVAAGRTVAVLEARDRVGGRTWSKTVDGAFLEIGGQWI) participates in FAD binding.

It belongs to the flavin monoamine oxidase family. Requires FAD as cofactor.

The catalysed reaction is putrescine + O2 + H2O = 4-aminobutanal + H2O2 + NH4(+). This chain is Putrescine oxidase (puo), found in Kocuria rosea (Deinococcus erythromyxa).